The chain runs to 346 residues: Syntaxin UFE1 (346 aa).

The Cytoplasmic segment spans residues 1 to 324; sequence MMSDLTPIFR…RKAKRAAGRT (324 aa). In terms of domain architecture, t-SNARE coiled-coil homology spans 255 to 317; it reads LNQKNEQLKK…KKGNKELRKA (63 aa). The helical; Anchor for type IV membrane protein transmembrane segment at 325 to 342 threads the bilayer; that stretch reads AKMTTYGAIIMGVFILFL. Residues 343-346 are Lumenal-facing; sequence DYVG.

Belongs to the syntaxin family. Component of a SNARE complex consisting of UFE1, USE1, SEC20 and SEC22 or YKT6.

Its subcellular location is the endoplasmic reticulum membrane. Its function is as follows. Syntaxin required for targeting and fusion of Golgi-derived retrograde transport vesicles with the ER. This chain is Syntaxin UFE1 (UFE1), found in Saccharomyces cerevisiae (strain ATCC 204508 / S288c) (Baker's yeast).